An 888-amino-acid polypeptide reads, in one-letter code: Interference hedgehog (888 aa).

Residues 1-24 (MSLTRFSLCLLLTLLLAAIPVYLA) form the signal peptide. The Extracellular segment spans residues 25–688 (SPDPGVRILR…SHNETFNLNP (664 aa)). 4 consecutive Ig-like C2-type domains span residues 28–123 (PGVR…ARLE), 134–215 (EGFK…VRLA), 234–321 (PHLL…SIQL), and 327–414 (PRIV…LQVN). Cystine bridges form between C51–C106, C155–C203, and C257–C305. Residues N80, N185, N192, N281, N336, N365, N369, and N455 are each glycosylated (N-linked (GlcNAc...) asparagine). Cysteines 348 and 396 form a disulfide. 2 consecutive Fibronectin type-III domains span residues 450 to 557 (PPSA…LQRG) and 565 to 660 (VPSL…TQRP). R486 and K493 together coordinate heparin. N516 carries an N-linked (GlcNAc...) asparagine glycan. R531 serves as a coordination point for heparin. N547 carries N-linked (GlcNAc...) asparagine glycosylation. Polar residues predominate over residues 655–667 (GRTQRPRVSTTTE). The tract at residues 655-679 (GRTQRPRVSTTTEPAVHAMDTTTPS) is disordered. N-linked (GlcNAc...) asparagine glycosylation is present at N681. Residues 689 to 709 (LLTGTIGGGALLVLLVVSACL) traverse the membrane as a helical segment. Residues 710-888 (CLCRRRSSRG…SSGSLNSVGV (179 aa)) lie on the Cytoplasmic side of the membrane. Disordered stretches follow at residues 759-789 (AQQQ…DMSY), 812-864 (SSSL…PGRV), and 869-888 (ARLS…SVGV). The span at 760–775 (QQQQQQQQQQQQQQQQ) shows a compositional bias: low complexity. Over residues 843–859 (QPTDGSTADSPRLQASN) the composition is skewed to polar residues. The span at 872–888 (SSRSENLSSGSLNSVGV) shows a compositional bias: low complexity.

Belongs to the immunoglobulin superfamily. IHOG family. Homodimer. Heterotetramer; 2 iHog chains bind 2 hh chains when facilitated by heparin, heparin is required to promote high-affinity interactions between hh and iHog.

Its subcellular location is the membrane. Mediates response to the active Hedgehog (Hh) protein signal in embryos, functioning upstream or at the level of patched (ptc). The chain is Interference hedgehog from Drosophila grimshawi (Hawaiian fruit fly).